The primary structure comprises 323 residues: Prenyl transferase (323 aa).

3 residues coordinate isopentenyl diphosphate: K46, R49, and H81. D88 and D92 together coordinate Mg(2+). R97 serves as a coordination point for an all-trans-polyprenyl diphosphate. R98 provides a ligand contact to isopentenyl diphosphate. An all-trans-polyprenyl diphosphate is bound by residues K174, T175, and Q212.

This sequence belongs to the FPP/GGPP synthase family. The cofactor is Mg(2+).

It localises to the plastid. It is found in the chloroplast. Functionally, possible role in synthesis of the nonaprenyl side chain of plastoquinone or in synthesis of other prenyl chains such as undekaprenyl pyrophosphate. This is Prenyl transferase (preA) from Porphyra purpurea (Red seaweed).